Here is a 289-residue protein sequence, read N- to C-terminus: Deleted in azoospermia-like (289 aa).

The disordered stretch occupies residues 1–20; it reads MSANAEAQCGSISEDNTHSS. Residues 36–117 form the RRM domain; sequence NTVFVGGIDI…PAIRKQQNLC (82 aa). The DAZ domain maps to 162–187; sequence TYAYSSPAVLIQQQVPVGYQPAYNYQ.

This sequence belongs to the RRM DAZ family.

Its subcellular location is the cytoplasm. Its function is as follows. RNA-binding protein, which probably plays a central role in gametogenesis in both males and females. Acts by binding to the 3'-UTR of mRNA, specifically recognizing GUU triplets, and promoting the translation of key transcripts. This is Deleted in azoospermia-like (DAZL) from Gallus gallus (Chicken).